Consider the following 151-residue polypeptide: Large ribosomal subunit protein bL9 (151 aa).

Belongs to the bacterial ribosomal protein bL9 family.

Binds to the 23S rRNA. This chain is Large ribosomal subunit protein bL9, found in Mycobacteroides abscessus (strain ATCC 19977 / DSM 44196 / CCUG 20993 / CIP 104536 / JCM 13569 / NCTC 13031 / TMC 1543 / L948) (Mycobacterium abscessus).